We begin with the raw amino-acid sequence, 195 residues long: Small ribosomal subunit protein bS16 (195 aa).

Low complexity predominate over residues 171–181 (PEAPVAAAEPA). A disordered region spans residues 171–195 (PEAPVAAAEPAPEVKAEEKEEGGEA).

This sequence belongs to the bacterial ribosomal protein bS16 family.

This is Small ribosomal subunit protein bS16 from Chlorobium luteolum (strain DSM 273 / BCRC 81028 / 2530) (Pelodictyon luteolum).